Here is a 158-residue protein sequence, read N- to C-terminus: Transcriptional repressor NrdR (158 aa).

Residues 3-34 fold into a zinc finger; sequence CPFCGSLDTQVIDSRANEAGDAIRRRRRCAAC. The ATP-cone domain maps to 49–139; the sequence is PQIVKTNGTR…VYKSFKDPDD (91 aa).

This sequence belongs to the NrdR family. Zn(2+) is required as a cofactor.

Negatively regulates transcription of bacterial ribonucleotide reductase nrd genes and operons by binding to NrdR-boxes. This is Transcriptional repressor NrdR from Thiobacillus denitrificans (strain ATCC 25259 / T1).